We begin with the raw amino-acid sequence, 227 residues long: N-acetyltransferase 8 (227 aa).

Residues M1–T42 lie on the Cytoplasmic side of the membrane. A helical; Signal-anchor for type II membrane protein transmembrane segment spans residues L43 to A63. The 160-residue stretch at L61 to P220 folds into the N-acetyltransferase domain. At L64–L227 the chain is on the lumenal side.

This sequence belongs to the NAT8 family. In terms of tissue distribution, preferentially expressed in liver and kidney. Also detected in brain (at protein level).

It localises to the endoplasmic reticulum-Golgi intermediate compartment membrane. The protein resides in the endoplasmic reticulum membrane. The catalysed reaction is L-lysyl-[protein] + acetyl-CoA = N(6)-acetyl-L-lysyl-[protein] + CoA + H(+). It carries out the reaction an S-substituted L-cysteine + acetyl-CoA = an N-acetyl-L-cysteine-S-conjugate + CoA + H(+). Its pathway is sulfur metabolism; glutathione metabolism. Its function is as follows. Endoplasmic reticulum (ER)-membrane-bound lysine N-acetyltransferase catalyzing the N6-acetylation of lysine residues in the lumen of the ER in various proteins, including PROM1 and BACE1, using acetyl-CoA as acetyl donor. Thereby, may regulate apoptosis through the acetylation and the regulation of the expression of PROM1. May also regulate amyloid beta-peptide secretion through acetylation of BACE1 and the regulation of its expression in neurons. N(6)-lysine acetylation in the ER maintains protein homeostasis and regulates reticulophagy. Alternatively, acetylates the free alpha-amino group of cysteine S-conjugates to form mercapturic acids. This is the final step in a major route for detoxification of a wide variety of reactive electrophiles which starts with their incorporation into glutathione S-conjugates. The glutathione S-conjugates are then further processed into cysteine S-conjugates and finally mercapturic acids which are water soluble and can be readily excreted in urine or bile. In Homo sapiens (Human), this protein is N-acetyltransferase 8.